The sequence spans 270 residues: Putative phosphoenolpyruvate synthase regulatory protein (270 aa).

Position 150 to 157 (150 to 157 (GVSRCGKT)) interacts with ADP.

This sequence belongs to the pyruvate, phosphate/water dikinase regulatory protein family. PSRP subfamily.

It catalyses the reaction [pyruvate, water dikinase] + ADP = [pyruvate, water dikinase]-phosphate + AMP + H(+). The enzyme catalyses [pyruvate, water dikinase]-phosphate + phosphate + H(+) = [pyruvate, water dikinase] + diphosphate. Bifunctional serine/threonine kinase and phosphorylase involved in the regulation of the phosphoenolpyruvate synthase (PEPS) by catalyzing its phosphorylation/dephosphorylation. This Shewanella pealeana (strain ATCC 700345 / ANG-SQ1) protein is Putative phosphoenolpyruvate synthase regulatory protein.